The sequence spans 142 residues: Hemoglobin larval subunit alpha (142 aa).

The Globin domain occupies 2–142 (VLSAEEKALV…VSAVLTSKYR (141 aa)). H59 is an O2 binding site. H88 contributes to the heme b binding site.

This sequence belongs to the globin family. Heterotetramer of two alpha chains and two beta chains. Red blood cells.

Functionally, involved in oxygen transport from the lung to the various peripheral tissues. The chain is Hemoglobin larval subunit alpha from Pleurodeles waltl (Iberian ribbed newt).